The chain runs to 341 residues: Glycerol-3-phosphate dehydrogenase [NAD(P)+] 1 (341 aa).

S17, W18, R37, and K112 together coordinate NADPH. Positions 112 and 140 each coordinate sn-glycerol 3-phosphate. A144 is a binding site for NADPH. Residues K195, D248, S258, R259, and N260 each coordinate sn-glycerol 3-phosphate. K195 serves as the catalytic Proton acceptor. Position 259 (R259) interacts with NADPH. 2 residues coordinate NADPH: V283 and E285.

It belongs to the NAD-dependent glycerol-3-phosphate dehydrogenase family.

It is found in the cytoplasm. It carries out the reaction sn-glycerol 3-phosphate + NAD(+) = dihydroxyacetone phosphate + NADH + H(+). It catalyses the reaction sn-glycerol 3-phosphate + NADP(+) = dihydroxyacetone phosphate + NADPH + H(+). It participates in membrane lipid metabolism; glycerophospholipid metabolism. Catalyzes the reduction of the glycolytic intermediate dihydroxyacetone phosphate (DHAP) to sn-glycerol 3-phosphate (G3P), the key precursor for phospholipid synthesis. This Mycobacterium bovis (strain ATCC BAA-935 / AF2122/97) protein is Glycerol-3-phosphate dehydrogenase [NAD(P)+] 1.